The sequence spans 591 residues: Aspartate--tRNA(Asp/Asn) ligase (591 aa).

Glu174 contributes to the L-aspartate binding site. Positions 198 to 201 (QLFK) are aspartate. Arg220 provides a ligand contact to L-aspartate. ATP is bound by residues 220–222 (RDE) and Gln229. His450 contributes to the L-aspartate binding site. Glu483 contacts ATP. Residue Arg490 participates in L-aspartate binding. 535-538 (GLDR) contributes to the ATP binding site.

The protein belongs to the class-II aminoacyl-tRNA synthetase family. Type 1 subfamily. Homodimer.

Its subcellular location is the cytoplasm. It carries out the reaction tRNA(Asx) + L-aspartate + ATP = L-aspartyl-tRNA(Asx) + AMP + diphosphate. In terms of biological role, aspartyl-tRNA synthetase with relaxed tRNA specificity since it is able to aspartylate not only its cognate tRNA(Asp) but also tRNA(Asn). Reaction proceeds in two steps: L-aspartate is first activated by ATP to form Asp-AMP and then transferred to the acceptor end of tRNA(Asp/Asn). This chain is Aspartate--tRNA(Asp/Asn) ligase, found in Pseudomonas putida (strain W619).